The following is a 519-amino-acid chain: Putative cytochrome P450 CYP13A10 (519 aa).

A helical membrane pass occupies residues 3-23 (VILLAIPTLFIGFISYYLWIW). Cys465 is a binding site for heme.

Belongs to the cytochrome P450 family. Requires heme as cofactor.

Its subcellular location is the membrane. Cytochromes P450 are a group of heme-thiolate monooxygenases. They oxidize a variety of structurally unrelated compounds, including steroids, fatty acids, and xenobiotics. The protein is Putative cytochrome P450 CYP13A10 (cyp-13A10) of Caenorhabditis elegans.